We begin with the raw amino-acid sequence, 67 residues long: Small ribosomal subunit protein eS17 (67 aa).

The protein belongs to the eukaryotic ribosomal protein eS17 family.

This is Small ribosomal subunit protein eS17 from Thermococcus onnurineus (strain NA1).